Reading from the N-terminus, the 464-residue chain is Cell division protein FtsA (464 aa).

The segment at 392 to 464 (EVIETDKDTE…FKKLMKSLFE (73 aa)) is disordered. Positions 416–455 (KKENDEVAPEAPREESYEDRENHLEDEQQTEGKAKEESKF) are enriched in basic and acidic residues.

It belongs to the FtsA/MreB family. In terms of assembly, self-interacts. Interacts with FtsZ.

The protein resides in the cell membrane. In terms of biological role, cell division protein that is involved in the assembly of the Z ring. May serve as a membrane anchor for the Z ring. The polypeptide is Cell division protein FtsA (Staphylococcus epidermidis (strain ATCC 12228 / FDA PCI 1200)).